A 309-amino-acid chain; its full sequence is tRNA uridine(34) hydroxylase (309 aa).

Positions 137-232 (RGDEVVFFDG…YGEKYGDKGL (96 aa)) constitute a Rhodanese domain. Cysteine 192 acts as the Cysteine persulfide intermediate in catalysis.

Belongs to the TrhO family.

It carries out the reaction uridine(34) in tRNA + AH2 + O2 = 5-hydroxyuridine(34) in tRNA + A + H2O. In terms of biological role, catalyzes oxygen-dependent 5-hydroxyuridine (ho5U) modification at position 34 in tRNAs. The protein is tRNA uridine(34) hydroxylase of Corynebacterium jeikeium (strain K411).